A 409-amino-acid chain; its full sequence is Protein naked cuticle homolog 2 (409 aa).

Residue Gly2 is the site of N-myristoyl glycine attachment. Residues 109–144 (AEDNRQEWVFTLYDFDNSGKVTKEDMSSLMHTIYDV) form the EF-hand domain. Ca(2+)-binding residues include Asp122, Asp124, Ser126, Lys128, and Asp133. Disordered stretches follow at residues 160–224 (LRVK…YCVD), 243–315 (TSRF…RYPG), 346–366 (SHTH…RIRS), and 388–409 (RHEH…YHQT). 2 stretches are compositionally biased toward basic and acidic residues: residues 171–185 (AARR…RETS) and 193–224 (VRSE…YCVD). Over residues 247-268 (DSSSPDADQDPPSRSSHSQSRP) the composition is skewed to low complexity. Over residues 389 to 409 (HEHHHHHEHHHHHHYHHYHQT) the composition is skewed to basic residues.

Belongs to the NKD family. As to expression, expressed ubiquitously until 1 dpf, when expression becomes confined to the anterior CNS, with slight expression in the developing tail.

The protein localises to the cell membrane. The protein resides in the cytoplasm. In terms of biological role, cell autonomous antagonist of both the canonical and non-canonical Wnt signaling pathways. This Danio rerio (Zebrafish) protein is Protein naked cuticle homolog 2 (nkd2).